Reading from the N-terminus, the 640-residue chain is Chaperone protein DnaK (640 aa).

T198 is subject to Phosphothreonine; by autocatalysis. The interval 600–640 (KTQGAGAEGSEQPHGEQEAGGAAKGETVVDADFEEVKDDKK) is disordered. The segment covering 628 to 640 (VDADFEEVKDDKK) has biased composition (acidic residues).

It belongs to the heat shock protein 70 family.

Its function is as follows. Acts as a chaperone. The sequence is that of Chaperone protein DnaK from Geobacter sp. (strain M21).